The sequence spans 259 residues: Flap endonuclease Xni (259 aa).

A Mg(2+)-binding site is contributed by aspartate 109. The region spanning 165 to 255 is the 5'-3' exonuclease domain; it reads LKPEQLADYW…FNLQDIRYEK (91 aa). Residues leucine 176, alanine 177, isoleucine 187, and valine 190 each coordinate K(+). Residues 189–194 are interaction with DNA; the sequence is GVGPKA.

It belongs to the Xni family. The cofactor is Mg(2+). It depends on K(+) as a cofactor.

Has flap endonuclease activity. During DNA replication, flap endonucleases cleave the 5'-overhanging flap structure that is generated by displacement synthesis when DNA polymerase encounters the 5'-end of a downstream Okazaki fragment. The sequence is that of Flap endonuclease Xni from Aliivibrio fischeri (strain ATCC 700601 / ES114) (Vibrio fischeri).